A 158-amino-acid chain; its full sequence is Arginine repressor (158 aa).

This sequence belongs to the ArgR family.

It localises to the cytoplasm. Its pathway is amino-acid biosynthesis; L-arginine biosynthesis [regulation]. Functionally, regulates arginine biosynthesis genes. This chain is Arginine repressor, found in Anaeromyxobacter sp. (strain Fw109-5).